Consider the following 239-residue polypeptide: Serine protease SplF (239 aa).

Positions methionine 1–alanine 36 are cleaved as a signal peptide. Active-site charge relay system residues include histidine 75, aspartate 114, and serine 192.

It belongs to the peptidase S1B family.

The protein resides in the secreted. The protein is Serine protease SplF (splF) of Staphylococcus aureus (strain NCTC 8325 / PS 47).